A 238-amino-acid chain; its full sequence is Probable transcriptional regulatory protein CPn_0573/CP_0176/CPj0573/CpB0595 (238 aa).

The interval 1-20 (MAGHSKWANTKHRKERADHK) is disordered. Over residues 9–20 (NTKHRKERADHK) the composition is skewed to basic residues.

Belongs to the TACO1 family.

The protein localises to the cytoplasm. The chain is Probable transcriptional regulatory protein CPn_0573/CP_0176/CPj0573/CpB0595 from Chlamydia pneumoniae (Chlamydophila pneumoniae).